Consider the following 335-residue polypeptide: MEDSGKTFSSEEEEANYWKDLAMTYKQRAENTQEELREFQEGSREYEAELETQLQQIETRNRDLLSENNRLRMELETIKEKFEVQHSEGYRQISALEDDLAQTKAIKDQLQKYIRELEQANDDLERAKRATIMSLEDFEQRLNQAIERNAFLESELDEKENLLESVQRLKDEARDLRQELAVQQKQEKPRTPMPSSVEAERTDTAVQATGSVPSTPIAHRGPSSSLNTPGSFRRGLDDSTGGTPLTPAARISALNIVGDLLRKVGALESKLASCRNLVYDQSPNRTGGPASGRSSKNRDGGERRPSSTSVPLGDKGLDTSCRWLSKSTTRSSSSC.

The self-association stretch occupies residues 1–93 (MEDSGKTFSS…VQHSEGYRQI (93 aa)). Residues 18-188 (WKDLAMTYKQ…ELAVQQKQEK (171 aa)) are a coiled coil. Residues 88–156 (EGYRQISALE…ERNAFLESEL (69 aa)) are interaction with PAFAH1B1. An interaction with CENPF region spans residues 167 to 290 (QRLKDEARDL…QSPNRTGGPA (124 aa)). A disordered region spans residues 181–246 (AVQQKQEKPR…DDSTGGTPLT (66 aa)). Over residues 204–214 (TAVQATGSVPS) the composition is skewed to polar residues. A Phosphoserine modification is found at Ser-211. Phosphothreonine occurs at positions 215 and 228. A phosphoserine mark is found at Ser-231 and Ser-239. Residues Thr-243 and Thr-246 each carry the phosphothreonine modification. Cys-274 is lipidated: S-palmitoyl cysteine; by ZDHHC2, ZDHHC3 and ZDHHC7. Residues 279-335 (YDQSPNRTGGPASGRSSKNRDGGERRPSSTSVPLGDKGLDTSCRWLSKSTTRSSSSC) form a disordered region. Ser-282 is modified (phosphoserine). The span at 296–305 (KNRDGGERRP) shows a compositional bias: basic and acidic residues. Ser-309 bears the Phosphoserine mark. Low complexity predominate over residues 325 to 335 (SKSTTRSSSSC).

The protein belongs to the nudE family. In terms of assembly, homodimer. Interacts with CNTRL, LIS1, dynein, SLMAP and TCP1. Interacts with CENPF, dynactin, tubulin gamma, PAFAH1B1, PCM1 and PCNT. Interacts with ZNF365. Interacts with GTP-bound RAB9A and RAB9B; the interaction leads to RAB9-dynein motor tethering. Interacts (via C-terminus) with MCRS1 (via C-terminus); phosphorylation of NDE1 inhibits the interaction. Post-translationally, phosphorylated in mitosis. Phosphorylated in vitro by CDC2. Phosphorylation at Thr-246 is essential for the G2/M transition. As to expression, expressed in the neuroepithelium throughout the developing brain, including the cerebral cortex and cerebellum.

It localises to the cytoplasm. Its subcellular location is the cytoskeleton. The protein resides in the microtubule organizing center. It is found in the centrosome. The protein localises to the chromosome. It localises to the centromere. Its subcellular location is the kinetochore. The protein resides in the spindle. It is found in the cleavage furrow. The protein localises to the cytoplasmic vesicle membrane. Functionally, required for centrosome duplication and formation and function of the mitotic spindle. Essential for the development of the cerebral cortex. May regulate the production of neurons by controlling the orientation of the mitotic spindle during division of cortical neuronal progenitors of the proliferative ventricular zone of the brain. Orientation of the division plane perpendicular to the layers of the cortex gives rise to two proliferative neuronal progenitors whereas parallel orientation of the division plane yields one proliferative neuronal progenitor and a postmitotic neuron. A premature shift towards a neuronal fate within the progenitor population may result in an overall reduction in the final number of neurons and an increase in the number of neurons in the deeper layers of the cortex. Acts as a RAB9A/B effector that tethers RAB9-associated late endosomes to the dynein motor for their retrograde transport to the trans-Golgi network. The protein is Nuclear distribution protein nudE homolog 1 of Homo sapiens (Human).